The following is an 827-amino-acid chain: Leucine--tRNA ligase (827 aa).

Positions 42 to 52 (PYPSGNLHMGH) match the 'HIGH' region motif. Positions 583 to 587 (KMSKS) match the 'KMSKS' region motif. Residue lysine 586 coordinates ATP.

The protein belongs to the class-I aminoacyl-tRNA synthetase family.

It is found in the cytoplasm. It carries out the reaction tRNA(Leu) + L-leucine + ATP = L-leucyl-tRNA(Leu) + AMP + diphosphate. This Desulfitobacterium hafniense (strain DSM 10664 / DCB-2) protein is Leucine--tRNA ligase.